The chain runs to 154 residues: uncharacterized protein (154 aa).

Zn(2+) contacts are provided by Cys4, Cys7, Cys16, Cys19, Cys24, Cys28, His32, and Cys36. The segment at 4 to 36 adopts an HIT-type zinc-finger fold; that stretch reads CSICNESEIKYKCPKCSFPYCSLPCWKIHQSQC.

This is an uncharacterized protein from Schizosaccharomyces pombe (strain 972 / ATCC 24843) (Fission yeast).